Here is a 692-residue protein sequence, read N- to C-terminus: Translation initiation factor IF-2 (692 aa).

The tr-type G domain occupies 194-363 (PRPPIVTVMG…LLVAEMEDLK (170 aa)). The segment at 203-210 (GHVDHGKT) is G1. Position 203–210 (203–210 (GHVDHGKT)) interacts with GTP. Residues 228–232 (GITQH) are G2. Residues 249–252 (DTPG) form a G3 region. Residues 249–253 (DTPGH) and 303–306 (NKID) each bind GTP. Residues 303-306 (NKID) form a G4 region. A G5 region spans residues 339–341 (SAK).

The protein belongs to the TRAFAC class translation factor GTPase superfamily. Classic translation factor GTPase family. IF-2 subfamily.

It is found in the cytoplasm. In terms of biological role, one of the essential components for the initiation of protein synthesis. Protects formylmethionyl-tRNA from spontaneous hydrolysis and promotes its binding to the 30S ribosomal subunits. Also involved in the hydrolysis of GTP during the formation of the 70S ribosomal complex. The sequence is that of Translation initiation factor IF-2 from Thermoanaerobacter sp. (strain X514).